We begin with the raw amino-acid sequence, 182 residues long: ATP-dependent protease subunit HslV (182 aa).

The active site involves threonine 12. Residues alanine 167, cysteine 170, and threonine 173 each coordinate Na(+).

The protein belongs to the peptidase T1B family. HslV subfamily. In terms of assembly, a double ring-shaped homohexamer of HslV is capped on each side by a ring-shaped HslU homohexamer. The assembly of the HslU/HslV complex is dependent on binding of ATP.

It localises to the cytoplasm. It catalyses the reaction ATP-dependent cleavage of peptide bonds with broad specificity.. With respect to regulation, allosterically activated by HslU binding. Functionally, protease subunit of a proteasome-like degradation complex believed to be a general protein degrading machinery. This Chlorobium chlorochromatii (strain CaD3) protein is ATP-dependent protease subunit HslV.